Here is a 1224-residue protein sequence, read N- to C-terminus: Integrin alpha pat-2 (1224 aa).

An N-terminal signal peptide occupies residues 1–27; that stretch reads MREGSFPRRTRLLCLLAAVVLISTVTS. At 28 to 1153 the chain is on the extracellular side; that stretch reads FNIDTKNVVL…ASEEGRDLPW (1126 aa). FG-GAP repeat units lie at residues 29–96, 110–173, 180–235, 236–292, 293–347, 364–423, and 427–490; these read NIDT…TCRE, NGSH…KTEE, EPAR…TDRP, NTEY…MMIN, LTDE…KPQY, GKQL…GVRE, and QKIE…PESA. N-linked (GlcNAc...) asparagine glycans are attached at residues N74, N110, N230, and N292. Residue N610 is glycosylated (N-linked (GlcNAc...) asparagine). A Cell attachment site motif is present at residues 622-624; the sequence is RGD. N-linked (GlcNAc...) asparagine glycans are attached at residues N681, N775, and N819. Disordered stretches follow at residues 898–968 and 981–1037; these read LRIT…QNTG and DYEY…KARF. Residues 920–931 show a composition bias toward acidic residues; sequence REEDDESYEDET. Residues 955 to 964 are compositionally biased toward basic and acidic residues; it reads VYERDEDKIR. Residues 984-1003 show a composition bias toward acidic residues; the sequence is YIPDDQEYDGDDFEDDDEDF. Residues 1008 to 1023 show a composition bias toward basic residues; it reads SKRVKRAPVPKKKKKE. A compositionally biased stretch (basic and acidic residues) spans 1024 to 1037; that stretch reads GSRSGEPRSDKARF. Residues 1154 to 1174 form a helical membrane-spanning segment; the sequence is WLYLLAILIGLAILILLILLL. Over 1175-1224 the chain is Cytoplasmic; that stretch reads WRCGFFKRNRPPTEHAELRAEKQPAAHYADTQSRYAPQDQYSQGRHGQML. The segment at 1190-1224 is disordered; it reads AELRAEKQPAAHYADTQSRYAPQDQYSQGRHGQML. Residues 1204–1224 show a composition bias toward polar residues; that stretch reads DTQSRYAPQDQYSQGRHGQML.

It belongs to the integrin alpha chain family. Heterodimer of an alpha and a beta subunit. Alpha pat-2 associates with beta pat-3.

The protein localises to the membrane. In terms of biological role, required for muscle development probably through the regulation of the actin-myosin cytoskeleton. During the formation of neuromuscular junctions at the larval stage, negatively regulates membrane protrusion from body wall muscles, probably through lamins such as epi-1, lam-2 and unc-52. Required for distal tip cell migration and dorsal pathfinding. Required for egg-laying. May play a role in cell motility and cell-cell interactions. This Caenorhabditis briggsae protein is Integrin alpha pat-2.